Consider the following 302-residue polypeptide: Nucleotide-binding protein Bmul_0520/BMULJ_02739 (302 aa).

An ATP-binding site is contributed by 8 to 15; that stretch reads GISGSGKS. 57–60 lines the GTP pocket; the sequence is DARS.

The protein belongs to the RapZ-like family.

Its function is as follows. Displays ATPase and GTPase activities. This chain is Nucleotide-binding protein Bmul_0520/BMULJ_02739, found in Burkholderia multivorans (strain ATCC 17616 / 249).